The chain runs to 256 residues: Pimeloyl-[acyl-carrier protein] methyl ester esterase (256 aa).

An AB hydrolase-1 domain is found at 15–242; sequence HLVLLHGWGL…AAHAPFISHP (228 aa). Residues W22, 82-83, and 143-147 each bind substrate; these read SL and FLALQ. The active-site Nucleophile is S82. Residues D207 and H235 contribute to the active site. H235 is a binding site for substrate.

Belongs to the AB hydrolase superfamily. Carboxylesterase BioH family. In terms of assembly, monomer.

It is found in the cytoplasm. It catalyses the reaction 6-carboxyhexanoyl-[ACP] methyl ester + H2O = 6-carboxyhexanoyl-[ACP] + methanol + H(+). Its pathway is cofactor biosynthesis; biotin biosynthesis. Functionally, the physiological role of BioH is to remove the methyl group introduced by BioC when the pimeloyl moiety is complete. It allows to synthesize pimeloyl-ACP via the fatty acid synthetic pathway through the hydrolysis of the ester bonds of pimeloyl-ACP esters. The protein is Pimeloyl-[acyl-carrier protein] methyl ester esterase of Salmonella dublin (strain CT_02021853).